Consider the following 272-residue polypeptide: 4-hydroxy-tetrahydrodipicolinate reductase (272 aa).

Residue 12 to 17 (GALGKM) participates in NAD(+) binding. Residue K39 participates in NADP(+) binding. Residues 102-104 (GTT) and 126-129 (SSNY) contribute to the NAD(+) site. The active-site Proton donor/acceptor is H159. Position 160 (H160) interacts with (S)-2,3,4,5-tetrahydrodipicolinate. The active-site Proton donor is the K163. Residue 169 to 170 (GT) coordinates (S)-2,3,4,5-tetrahydrodipicolinate.

Belongs to the DapB family. In terms of assembly, homotetramer.

It localises to the cytoplasm. The catalysed reaction is (S)-2,3,4,5-tetrahydrodipicolinate + NAD(+) + H2O = (2S,4S)-4-hydroxy-2,3,4,5-tetrahydrodipicolinate + NADH + H(+). It carries out the reaction (S)-2,3,4,5-tetrahydrodipicolinate + NADP(+) + H2O = (2S,4S)-4-hydroxy-2,3,4,5-tetrahydrodipicolinate + NADPH + H(+). The protein operates within amino-acid biosynthesis; L-lysine biosynthesis via DAP pathway; (S)-tetrahydrodipicolinate from L-aspartate: step 4/4. Catalyzes the conversion of 4-hydroxy-tetrahydrodipicolinate (HTPA) to tetrahydrodipicolinate. This chain is 4-hydroxy-tetrahydrodipicolinate reductase, found in Buchnera aphidicola subsp. Baizongia pistaciae (strain Bp).